Consider the following 228-residue polypeptide: Ankyrin repeat domain-containing protein 46 (228 aa).

ANK repeat units follow at residues 11 to 40, 44 to 74, 77 to 103, and 107 to 138; these read QTNVPLLQACIDGDFTYSKRLLESGFDPNI, RGRTGLHLAAARGNVDICQLLHKFGADPLAT, QGNTALHLCGHVDTIQFLVSNGLKIDI, and QGATPLVLAKRRGVNKDVIRLLESLEEQEVKG. The chain crosses the membrane as a helical span at residues 195–215; sequence VLLLILVIALLSLGIAYYVSG.

It is found in the membrane. The protein is Ankyrin repeat domain-containing protein 46 (Ankrd46) of Mus musculus (Mouse).